A 1331-amino-acid polypeptide reads, in one-letter code: MAAAWLGWLLWALLLSAAQGELYTPKHEAGVCTFYEECGKNPELSGGLTSLSNVSCLSNTPARHVTGEHLALLQRICPRLYNGPNTTFACCSTKQLLSLESSMSITKALLTRCPACSDNFVSLHCHNTCSPDQSLFINVTRVVERGAGEPPAVVAYEAFYQRSFAEKAYESCSQVRIPAAASLAVGSMCGVYGSALCNAQRWLNFQGDTGNGLAPLDITFHLLEPGQALPDGIQPLNGKIAPCNESQGDDSAVCSCQDCAASCPVIPPPEALRPSFYMGRMPGWLALIIIFTAVFVLLSAVLVRLRVVSNRNKNKAEGPQEAPKLPHKHKLSPHTILGRFFQNWGTRVASWPLTVLALSFIVVIALAAGLTFIELTTDPVELWSAPKSQARKEKSFHDEHFGPFFRTNQIFVTARNRSSYKYDSLLLGSKNFSGILSLDFLLELLELQERLRHLQVWSPEAERNISLQDICYAPLNPYNTSLSDCCVNSLLQYFQNNRTLLMLTANQTLNGQTSLVDWKDHFLYCANAPLTFKDGTSLALSCMADYGAPVFPFLAVGGYQGTDYSEAEALIITFSLNNYPADDPRMAQAKLWEEAFLKEMESFQRNTSDKFQVAFSAERSLEDEINRTTIQDLPVFAVSYIIVFLYISLALGSYSRCSRVAVESKATLGLGGVIVVLGAVLAAMGFYSYLGVPSSLVIIQVVPFLVLAVGADNIFIFVLEYQRLPRMPGEQREAHIGRTLGSVAPSMLLCSLSEAICFFLGALTPMPAVRTFALTSGLAIILDFLLQMTAFVALLSLDSKRQEASRPDVLCCFSTRKLPPPKEKEGLLLRFFRKIYAPFLLHRFIRPVVMLLFLTLFGANLYLMCNINVGLDQELALPKDSYLIDYFLFLNRYLEVGPPVYFVTTSGFNFSSEAGMNATCSSAGCKSFSLTQKIQYASEFPDQSYVAIAASSWVDDFIDWLTPSSSCCRLYIRGPHKDEFCPSTDTSFNCLKNCMNRTLGPVRPTAEQFHKYLPWFLNDPPNIRCPKGGLAAYRTSVNLSSDGQVIASQFMAYHKPLRNSQDFTEALRASRLLAANITADLRKVPGTDPNFEVFPYTISNVFYQQYLTVLPEGIFTLALCFVPTFVVCYLLLGLDMCSGILNLLSIIMILVDTIGLMAVWGISYNAVSLINLVTAVGMSVEFVSHITRSFAVSTKPTRLERAKDATVFMGSAVFAGVAMTNFPGILILGFAQAQLIQIFFFRLNLLITLLGLLHGLVFLPVVLSYLGPDVNQALVQEEKLASEAAVAPEPSCPQYPSPADADANVNYGFAPELAHGANAARSSLPKSDQKF.

The first 20 residues, 1 to 20, serve as a signal peptide directing secretion; the sequence is MAAAWLGWLLWALLLSAAQG. Over 21 to 282 the chain is Extracellular; the sequence is ELYTPKHEAG…RPSFYMGRMP (262 aa). Intrachain disulfides connect C32–C90, C38–C56, C77–C125, C91–C129, C113–C254, C116–C172, C189–C197, C243–C259, and C256–C263. 2 N-linked (GlcNAc...) asparagine glycosylation sites follow: N53 and N85. N-linked (GlcNAc...) asparagine glycosylation occurs at N138. Residue N244 is glycosylated (N-linked (GlcNAc...) asparagine). The helical transmembrane segment at 283-303 threads the bilayer; that stretch reads GWLALIIIFTAVFVLLSAVLV. Residues 304-352 are Cytoplasmic-facing; that stretch reads RLRVVSNRNKNKAEGPQEAPKLPHKHKLSPHTILGRFFQNWGTRVASWP. Residues 353 to 373 form a helical membrane-spanning segment; sequence LTVLALSFIVVIALAAGLTFI. At 374–632 the chain is on the extracellular side; it reads ELTTDPVELW…DEINRTTIQD (259 aa). N416, N431, N464, N479, N497, and N506 each carry an N-linked (GlcNAc...) asparagine glycan. C471 and C485 are joined by a disulfide. C525 and C542 are disulfide-bonded. N606 and N626 each carry an N-linked (GlcNAc...) asparagine glycan. Positions 632 to 797 constitute an SSD domain; that stretch reads DLPVFAVSYI…MTAFVALLSL (166 aa). A helical transmembrane segment spans residues 633-653; sequence LPVFAVSYIIVFLYISLALGS. The Cytoplasmic segment spans residues 654–665; the sequence is YSRCSRVAVESK. The helical transmembrane segment at 666–686 threads the bilayer; it reads ATLGLGGVIVVLGAVLAAMGF. Residues 687 to 696 lie on the Extracellular side of the membrane; that stretch reads YSYLGVPSSL. Residues 697–717 form a helical membrane-spanning segment; it reads VIIQVVPFLVLAVGADNIFIF. The Cytoplasmic portion of the chain corresponds to 718 to 742; the sequence is VLEYQRLPRMPGEQREAHIGRTLGS. A helical membrane pass occupies residues 743–763; that stretch reads VAPSMLLCSLSEAICFFLGAL. Topologically, residues 764–776 are extracellular; the sequence is TPMPAVRTFALTS. Residues 777–797 form a helical membrane-spanning segment; sequence GLAIILDFLLQMTAFVALLSL. Residues 798–846 lie on the Cytoplasmic side of the membrane; it reads DSKRQEASRPDVLCCFSTRKLPPPKEKEGLLLRFFRKIYAPFLLHRFIR. A helical membrane pass occupies residues 847–867; it reads PVVMLLFLTLFGANLYLMCNI. At 868–1113 the chain is on the extracellular side; it reads NVGLDQELAL…QQYLTVLPEG (246 aa). N909 and N917 each carry an N-linked (GlcNAc...) asparagine glycan. Intrachain disulfides connect C920–C925, C967–C1025, and C981–C990. Residues N996, N1038, and N1076 are each glycosylated (N-linked (GlcNAc...) asparagine). A helical membrane pass occupies residues 1114-1134; it reads IFTLALCFVPTFVVCYLLLGL. The Cytoplasmic segment spans residues 1135 to 1142; sequence DMCSGILN. Residues 1143 to 1163 traverse the membrane as a helical segment; that stretch reads LLSIIMILVDTIGLMAVWGIS. Over 1164–1165 the chain is Extracellular; that stretch reads YN. Residues 1166–1186 traverse the membrane as a helical segment; the sequence is AVSLINLVTAVGMSVEFVSHI. Residues 1187-1206 lie on the Cytoplasmic side of the membrane; that stretch reads TRSFAVSTKPTRLERAKDAT. The helical transmembrane segment at 1207-1227 threads the bilayer; the sequence is VFMGSAVFAGVAMTNFPGILI. Topologically, residues 1228–1242 are extracellular; the sequence is LGFAQAQLIQIFFFR. A helical transmembrane segment spans residues 1243-1263; sequence LNLLITLLGLLHGLVFLPVVL. Over 1264–1331 the chain is Cytoplasmic; that stretch reads SYLGPDVNQA…SSLPKSDQKF (68 aa).

It belongs to the patched family. Interacts with RAB11A, MYO5B and RAB11FIP2. Interaction with RAB11A, MYO5B and RAB11FIP2 is required for proper transport to the plasma membrane upon cholesterol depletion. Interacts with NPC2. Interacts with LIMA1. Post-translationally, highly glycosylated. Small intestine showed the highest level of expression. Expression in other tissues including gall bladder, liver, testis and stomach is also observed. Along the duodenum-ileum axis, the levels vary in different segments of the intestine with peak expression in the proximal jejunum. Protein expression is confined to the enterocyte. Discrete localization to the epithelial layer bordering the luminal space along the crypt-villus axis. Protein expression in the enterocyte is observed closest to the luminal space. Expression in enterocytes from the proximal (jejunum) but not in the distal (ileum) region.

It is found in the apical cell membrane. The protein resides in the cell membrane. It carries out the reaction cholesterol(in) = cholesterol(out). It catalyses the reaction sitosterol(out) = sitosterol(in). Functionally, plays a major role in cholesterol homeostasis. Critical for the uptake of cholesterol across the plasma membrane of the intestinal enterocyte. Involved in plant sterol absorption, it transports sitosterol, although at lower rates than cholesterol. Is the direct molecular target of ezetimibe, a drug that inhibits cholesterol absorption and is approved for the treatment of hypercholesterolemia. May have a function in the transport of multiple lipids and their homeostasis, thereby influencing lipid metabolism regulation. May be involved in caveolin trafficking from the plasma membrane. Acts as a negative regulator of NPC2 and down-regulates its expression and secretion by inhibiting its maturation and accelerating its degradation. This chain is NPC1-like intracellular cholesterol transporter 1, found in Rattus norvegicus (Rat).